The following is a 734-amino-acid chain: Diacylglycerol kinase alpha (734 aa).

EF-hand domains are found at residues 109-144 (RPED…MMRM) and 154-189 (ELRP…TVPL). 9 residues coordinate Ca(2+): Asp-122, Asp-124, Asn-126, Glu-133, Asp-167, Asp-169, Ser-171, Ser-173, and Glu-178. Phorbol-ester/DAG-type zinc fingers lie at residues 204–252 (QHMW…ALPC) and 268–318 (THVW…GHEC). A necessary and sufficient for the diacylglycerol kinase activity region spans residues 358-505 (NLSTSEALRI…MDRWSVEVIP (148 aa)). Residues 371-505 (SNTHPLLVFV…MDRWSVEVIP (135 aa)) form the DAGKc domain. An N6-acetyllysine modification is found at Lys-483.

This sequence belongs to the eukaryotic diacylglycerol kinase family. Monomer.

Its subcellular location is the cytoplasm. The protein localises to the cytosol. It catalyses the reaction a 1,2-diacyl-sn-glycerol + ATP = a 1,2-diacyl-sn-glycero-3-phosphate + ADP + H(+). The catalysed reaction is a 1-O-alkyl-sn-glycerol + ATP = a 1-O-alkyl-sn-glycero-3-phosphate + ADP + H(+). It carries out the reaction 1-O-alkyl-2-acyl-sn-glycerol + ATP = 1-O-alkyl-2-acyl-sn-glycero-3-phosphate + ADP + H(+). The enzyme catalyses 1,2-dihexadecanoyl-sn-glycerol + ATP = 1,2-dihexadecanoyl-sn-glycero-3-phosphate + ADP + H(+). It catalyses the reaction 1-hexadecanoyl-2-(9Z-octadecenoyl)-sn-glycerol + ATP = 1-hexadecanoyl-2-(9Z-octadecenoyl)-sn-glycero-3-phosphate + ADP + H(+). The catalysed reaction is 2-(9Z-octadecenoyl)-glycerol + ATP = 2-(9Z-octadecenoyl)-sn-glycero-3-phosphate + ADP + H(+). It carries out the reaction 1,2-di-(9Z-octadecenoyl)-sn-glycerol + ATP = 1,2-di-(9Z-octadecenoyl)-sn-glycero-3-phosphate + ADP + H(+). The enzyme catalyses 1-octadecanoyl-2-(5Z,8Z,11Z,14Z-eicosatetraenoyl)-sn-glycerol + ATP = 1-octadecanoyl-2-(5Z,8Z,11Z,14Z-eicosatetraenoyl)-sn-glycero-3-phosphate + ADP + H(+). It catalyses the reaction 1,2-didecanoyl-sn-glycerol + ATP = 1,2-didecanoyl-sn-glycero-3-phosphate + ADP + H(+). The catalysed reaction is 1-O-hexadecyl-2-acetyl-sn-glycerol + ATP = 1-O-hexadecyl-2-acetyl-sn-glycero-3-phosphate + ADP + H(+). It carries out the reaction 1-O-hexadecyl-2-(5Z,8Z,11Z,14Z-eicosatetraenoyl)-sn-glycerol + ATP = 1-O-hexadecyl-2-(5Z,8Z,11Z,14Z-eicosatetraenoyl)-sn-glycero-3-phosphate + ADP + H(+). The enzyme catalyses 1-O-hexadecyl-2-(9Z-octadecenoyl)-sn-glycerol + ATP = 1-O-hexadecyl-2-(9Z-octadecenoyl)-sn-glycero-3-phosphate + ADP + H(+). It catalyses the reaction 1-O-hexadecyl-sn-glycerol + ATP = 1-O-hexadecyl-sn-glycero-3-phosphate + ADP + H(+). It participates in lipid metabolism; glycerolipid metabolism. With respect to regulation, stimulated by calcium and phosphatidylserine. Its function is as follows. Diacylglycerol kinase that converts diacylglycerol/DAG into phosphatidic acid/phosphatidate/PA and regulates the respective levels of these two bioactive lipids. Thereby, acts as a central switch between the signaling pathways activated by these second messengers with different cellular targets and opposite effects in numerous biological processes. Also plays an important role in the biosynthesis of complex lipids. Can also phosphorylate 1-alkyl-2-acylglycerol in vitro as efficiently as diacylglycerol provided it contains an arachidonoyl group. Also involved in the production of alkyl-lysophosphatidic acid, another bioactive lipid, through the phosphorylation of 1-alkyl-2-acetyl glycerol. The chain is Diacylglycerol kinase alpha (DGKA) from Sus scrofa (Pig).